The following is a 259-amino-acid chain: Thiazole synthase (259 aa).

Lys102 serves as the catalytic Schiff-base intermediate with DXP. 1-deoxy-D-xylulose 5-phosphate-binding positions include Gly163, 189–190 (AG), and 211–212 (NT).

The protein belongs to the ThiG family. Homotetramer. Forms heterodimers with either ThiH or ThiS.

Its subcellular location is the cytoplasm. The enzyme catalyses [ThiS sulfur-carrier protein]-C-terminal-Gly-aminoethanethioate + 2-iminoacetate + 1-deoxy-D-xylulose 5-phosphate = [ThiS sulfur-carrier protein]-C-terminal Gly-Gly + 2-[(2R,5Z)-2-carboxy-4-methylthiazol-5(2H)-ylidene]ethyl phosphate + 2 H2O + H(+). It participates in cofactor biosynthesis; thiamine diphosphate biosynthesis. Its function is as follows. Catalyzes the rearrangement of 1-deoxy-D-xylulose 5-phosphate (DXP) to produce the thiazole phosphate moiety of thiamine. Sulfur is provided by the thiocarboxylate moiety of the carrier protein ThiS. In vitro, sulfur can be provided by H(2)S. The protein is Thiazole synthase of Novosphingobium aromaticivorans (strain ATCC 700278 / DSM 12444 / CCUG 56034 / CIP 105152 / NBRC 16084 / F199).